The primary structure comprises 425 residues: RNA-binding protein L (425 aa).

Positions 1–20 (MQQPPSQPQPGMGGPPPPPQ) are enriched in pro residues. The tract at residues 1–82 (MQQPPSQPQP…AAPPPQAMPA (82 aa)) is disordered. Over residues 21 to 31 (GAAGQPPQWGA) the composition is skewed to low complexity. A compositionally biased stretch (pro residues) spans 32-80 (IPPPMPPHQYGAPPPQQPPAMWGQPPPQAHYGQVPPPQPYYAAPPPQAM). 3 RRM domains span residues 90-170 (KTLW…WASA), 180-259 (YTIF…PAAN), and 284-356 (TTIF…WGRS).

This sequence belongs to the polyadenylate-binding RBP45 family. In terms of assembly, interacts with RBP-P. Interacts with RAB5A.

The protein resides in the nucleus. It is found in the cytoplasm. Functionally, RNA-binding protein that binds to a cis-localization element or zipcode, within the 5'-CDS of prolamine RNA. Binds strongly to glutelin and prolamin mRNAs, particularly to 3'-UTR and zipcode RNA. Recognizes and binds to glutelin zipcode RNA, which is required for proper mRNA localization to cisternal endoplasmic reticulum. Recognizes and binds to prolamin zipcode RNA, which is required for proper mRNA localization to the protein body endoplasmic reticulum that delimits the prolamine intracisternal inclusion granules. Required for the correct localization of glutelin and prolamine mRNA in endosperm cells during grain development. RBP-L and RBP-P form a quaternary complex with the membrane trafficking factors NSF and RAB5A. This quaternay complex carries glutelin mRNAs for active transport on endosomes to the cortical endoplasmic reticulum membrane, and enables endosome-mediated glutelin mRNA transport in endosperm cells. The sequence is that of RNA-binding protein L from Oryza sativa subsp. japonica (Rice).